Consider the following 380-residue polypeptide: Putative F-box/kelch-repeat protein At2g44030 (380 aa).

The region spanning 16-66 (PKSFLSLPYDVVFNCLSRVSRTHDPILSLVSKSFRSLLALPDLEAERFRIL) is the F-box domain. Kelch repeat units lie at residues 123-170 (EIYL…VIDG) and 172-219 (INVY…ALIK).

The polypeptide is Putative F-box/kelch-repeat protein At2g44030 (Arabidopsis thaliana (Mouse-ear cress)).